The primary structure comprises 282 residues: Bifunctional protein FolD (282 aa).

NADP(+) is bound by residues 165-167 (GRS) and serine 190.

This sequence belongs to the tetrahydrofolate dehydrogenase/cyclohydrolase family. In terms of assembly, homodimer.

It catalyses the reaction (6R)-5,10-methylene-5,6,7,8-tetrahydrofolate + NADP(+) = (6R)-5,10-methenyltetrahydrofolate + NADPH. It carries out the reaction (6R)-5,10-methenyltetrahydrofolate + H2O = (6R)-10-formyltetrahydrofolate + H(+). Its pathway is one-carbon metabolism; tetrahydrofolate interconversion. Catalyzes the oxidation of 5,10-methylenetetrahydrofolate to 5,10-methenyltetrahydrofolate and then the hydrolysis of 5,10-methenyltetrahydrofolate to 10-formyltetrahydrofolate. The polypeptide is Bifunctional protein FolD (Macrococcus caseolyticus (strain JCSC5402) (Macrococcoides caseolyticum)).